The sequence spans 411 residues: Argininosuccinate synthase (411 aa).

Residues 15–23 (AYSGGLDTS) and Ala-42 each bind ATP. The L-citrulline site is built by Tyr-93 and Ser-98. Residue Gly-123 coordinates ATP. Residues Thr-125, Asn-129, and Asp-130 each coordinate L-aspartate. Asn-129 contacts L-citrulline. Residues Arg-133, Ser-185, Ser-194, Glu-270, and Tyr-282 each coordinate L-citrulline.

It belongs to the argininosuccinate synthase family. Type 1 subfamily. As to quaternary structure, homotetramer.

The protein resides in the cytoplasm. The enzyme catalyses L-citrulline + L-aspartate + ATP = 2-(N(omega)-L-arginino)succinate + AMP + diphosphate + H(+). Its pathway is amino-acid biosynthesis; L-arginine biosynthesis; L-arginine from L-ornithine and carbamoyl phosphate: step 2/3. The chain is Argininosuccinate synthase from Psychrobacter sp. (strain PRwf-1).